The following is a 397-amino-acid chain: Succinate--CoA ligase [ADP-forming] subunit beta (397 aa).

An ATP-grasp domain is found at 9–254 (KALLRSYGAP…ETEEDPKELA (246 aa)). Residues K46, 53–55 (GRG), E109, S112, and E117 each bind ATP. Mg(2+)-binding residues include N209 and D223. Residues N274 and 331-333 (GIM) contribute to the substrate site.

The protein belongs to the succinate/malate CoA ligase beta subunit family. In terms of assembly, heterotetramer of two alpha and two beta subunits. The cofactor is Mg(2+).

The enzyme catalyses succinate + ATP + CoA = succinyl-CoA + ADP + phosphate. It catalyses the reaction GTP + succinate + CoA = succinyl-CoA + GDP + phosphate. Its pathway is carbohydrate metabolism; tricarboxylic acid cycle; succinate from succinyl-CoA (ligase route): step 1/1. Succinyl-CoA synthetase functions in the citric acid cycle (TCA), coupling the hydrolysis of succinyl-CoA to the synthesis of either ATP or GTP and thus represents the only step of substrate-level phosphorylation in the TCA. The beta subunit provides nucleotide specificity of the enzyme and binds the substrate succinate, while the binding sites for coenzyme A and phosphate are found in the alpha subunit. This chain is Succinate--CoA ligase [ADP-forming] subunit beta, found in Cereibacter sphaeroides (strain ATCC 17029 / ATH 2.4.9) (Rhodobacter sphaeroides).